A 793-amino-acid polypeptide reads, in one-letter code: Probable phosphoketolase (793 aa).

It belongs to the XFP family. The cofactor is thiamine diphosphate.

The sequence is that of Probable phosphoketolase from Streptomyces avermitilis (strain ATCC 31267 / DSM 46492 / JCM 5070 / NBRC 14893 / NCIMB 12804 / NRRL 8165 / MA-4680).